We begin with the raw amino-acid sequence, 69 residues long: Sec-independent protein translocase protein TatA (69 aa).

A helical transmembrane segment spans residues 1–21; the sequence is MFGLGTMEMVIILVIVLVIFG. The disordered stretch occupies residues 44–69; that stretch reads NAEDDAPAEPEVSKPAAAESTEKKDA.

It belongs to the TatA/E family. In terms of assembly, the Tat system comprises two distinct complexes: a TatABC complex, containing multiple copies of TatA, TatB and TatC subunits, and a separate TatA complex, containing only TatA subunits. Substrates initially bind to the TatABC complex, which probably triggers association of the separate TatA complex to form the active translocon.

It localises to the cell inner membrane. Part of the twin-arginine translocation (Tat) system that transports large folded proteins containing a characteristic twin-arginine motif in their signal peptide across membranes. TatA could form the protein-conducting channel of the Tat system. This chain is Sec-independent protein translocase protein TatA, found in Magnetococcus marinus (strain ATCC BAA-1437 / JCM 17883 / MC-1).